The primary structure comprises 254 residues: Type III pantothenate kinase (254 aa).

6-13 (DVGNSNIV) is an ATP binding site. Substrate contacts are provided by residues Y100 and 107–110 (GADR). The active-site Proton acceptor is D109. A K(+)-binding site is contributed by D129. T132 contributes to the ATP binding site. Position 184 (T184) interacts with substrate.

It belongs to the type III pantothenate kinase family. As to quaternary structure, homodimer. NH4(+) is required as a cofactor. The cofactor is K(+).

The protein resides in the cytoplasm. The catalysed reaction is (R)-pantothenate + ATP = (R)-4'-phosphopantothenate + ADP + H(+). It participates in cofactor biosynthesis; coenzyme A biosynthesis; CoA from (R)-pantothenate: step 1/5. Catalyzes the phosphorylation of pantothenate (Pan), the first step in CoA biosynthesis. This chain is Type III pantothenate kinase, found in Pelobacter propionicus (strain DSM 2379 / NBRC 103807 / OttBd1).